Consider the following 344-residue polypeptide: N-acetyl-gamma-glutamyl-phosphate reductase (344 aa).

The active site involves C150.

Belongs to the NAGSA dehydrogenase family. Type 1 subfamily.

The protein resides in the cytoplasm. It carries out the reaction N-acetyl-L-glutamate 5-semialdehyde + phosphate + NADP(+) = N-acetyl-L-glutamyl 5-phosphate + NADPH + H(+). Its pathway is amino-acid biosynthesis; L-arginine biosynthesis; N(2)-acetyl-L-ornithine from L-glutamate: step 3/4. Its function is as follows. Catalyzes the NADPH-dependent reduction of N-acetyl-5-glutamyl phosphate to yield N-acetyl-L-glutamate 5-semialdehyde. This Pseudomonas aeruginosa (strain ATCC 15692 / DSM 22644 / CIP 104116 / JCM 14847 / LMG 12228 / 1C / PRS 101 / PAO1) protein is N-acetyl-gamma-glutamyl-phosphate reductase.